The primary structure comprises 144 residues: Small ribosomal subunit protein eS19A (144 aa).

Belongs to the eukaryotic ribosomal protein eS19 family. In terms of assembly, component of the small ribosomal subunit (SSU). Mature yeast ribosomes consist of a small (40S) and a large (60S) subunit. The 40S small subunit contains 1 molecule of ribosomal RNA (18S rRNA) and 33 different proteins (encoded by 57 genes). The large 60S subunit contains 3 rRNA molecules (25S, 5.8S and 5S rRNA) and 46 different proteins (encoded by 81 genes).

It localises to the cytoplasm. In terms of biological role, component of the ribosome, a large ribonucleoprotein complex responsible for the synthesis of proteins in the cell. The small ribosomal subunit (SSU) binds messenger RNAs (mRNAs) and translates the encoded message by selecting cognate aminoacyl-transfer RNA (tRNA) molecules. The large subunit (LSU) contains the ribosomal catalytic site termed the peptidyl transferase center (PTC), which catalyzes the formation of peptide bonds, thereby polymerizing the amino acids delivered by tRNAs into a polypeptide chain. The nascent polypeptides leave the ribosome through a tunnel in the LSU and interact with protein factors that function in enzymatic processing, targeting, and the membrane insertion of nascent chains at the exit of the ribosomal tunnel. eS19 is required for proper maturation of the small (40S) ribosomal subunit. Binds to 40S pre-ribosomal particles, probably required after association of NOC4 but before association of ENP1, TSR1 and RIO2 with 20/21S pre-rRNA. This chain is Small ribosomal subunit protein eS19A, found in Saccharomyces cerevisiae (strain ATCC 204508 / S288c) (Baker's yeast).